The following is a 275-amino-acid chain: NH(3)-dependent NAD(+) synthetase (275 aa).

46 to 53 (GISGGQDS) provides a ligand contact to ATP. Asp52 is a binding site for Mg(2+). Arg140 is a binding site for deamido-NAD(+). ATP is bound at residue Thr160. Glu165 is a binding site for Mg(2+). Deamido-NAD(+)-binding residues include Lys173 and Asp180. 2 residues coordinate ATP: Lys189 and Thr211. 260 to 261 (HK) is a binding site for deamido-NAD(+).

Belongs to the NAD synthetase family. Homodimer.

The enzyme catalyses deamido-NAD(+) + NH4(+) + ATP = AMP + diphosphate + NAD(+) + H(+). It participates in cofactor biosynthesis; NAD(+) biosynthesis; NAD(+) from deamido-NAD(+) (ammonia route): step 1/1. Catalyzes the ATP-dependent amidation of deamido-NAD to form NAD. Uses ammonia as a nitrogen source. The chain is NH(3)-dependent NAD(+) synthetase from Escherichia coli O7:K1 (strain IAI39 / ExPEC).